Reading from the N-terminus, the 483-residue chain is MSFRLRYAPSPTGFLHIGNTRTALMNYLFAKHYNGSFIVRIEDTDLARNVDGAIESQFENLNWLGIFPDESIFNVGDQKYGKYMQSQKFDRYKQLAEQLVNQNKAYRCFCSSEELEKDYEEQTSKEIIATKYSQKCLFLTQDQISQNLKDKKEYSIRFKVPQNKVWTINDIVRGDVSFDSKDLGDFVILKSNGVATYNFAVVIDDYDMQITHVLRGEEHISNTPRQMMIYDAFNWNYPKFGHLTLIVDNTGKKLSKRSGNALFFIEQYKKQGYLSQAIFNYIALLGWSPPGEQEILSQNELIKIFDEKRFSKSPSTFDMVKMKWINSVYMKKLEDNEYLEFVKSFINTNKFDITSKSEAWLNHLLLLYKKELEYAEQINDHLDLFFNKNTLDNNTIDVLNNLTNYKNVVEIFKNQINDLKDWTIENIKQIIKDTSTLANVKGKDLFMPIRIFATKSEHGPSLADVIYLLGKTTVLNNINSLER.

Positions 9–19 (PSPTGFLHIGN) match the 'HIGH' region motif. The short motif at 253–257 (KLSKR) is the 'KMSKS' region element. Lys256 contributes to the ATP binding site.

This sequence belongs to the class-I aminoacyl-tRNA synthetase family. Glutamate--tRNA ligase type 1 subfamily. As to quaternary structure, monomer.

It is found in the cytoplasm. It carries out the reaction tRNA(Glu) + L-glutamate + ATP = L-glutamyl-tRNA(Glu) + AMP + diphosphate. Functionally, catalyzes the attachment of glutamate to tRNA(Glu) in a two-step reaction: glutamate is first activated by ATP to form Glu-AMP and then transferred to the acceptor end of tRNA(Glu). This Mycoplasma mycoides subsp. mycoides SC (strain CCUG 32753 / NCTC 10114 / PG1) protein is Glutamate--tRNA ligase.